Reading from the N-terminus, the 239-residue chain is Small ribosomal subunit protein uS3 (239 aa).

Residues 39-107 (VREFLRKKLA…ATSINIEEIR (69 aa)) enclose the KH type-2 domain. The disordered stretch occupies residues 215–239 (TSNTNELSDEKRNRRKPRNANRRKE). Basic residues predominate over residues 227-239 (NRRKPRNANRRKE).

This sequence belongs to the universal ribosomal protein uS3 family. As to quaternary structure, part of the 30S ribosomal subunit. Forms a tight complex with proteins S10 and S14.

Binds the lower part of the 30S subunit head. Binds mRNA in the 70S ribosome, positioning it for translation. This Dichelobacter nodosus (strain VCS1703A) protein is Small ribosomal subunit protein uS3.